Consider the following 221-residue polypeptide: NEP1-interacting protein-like 1 (221 aa).

Helical transmembrane passes span 35–55 (LFTF…GALI), 69–89 (VGAI…LLLW), and 95–115 (GIGC…GRLV). The segment at 176–218 (CSVCLQDFQVGETVRSLPHCHHMFHLPCIDKWLRRHASCPLCR) adopts an RING-type; atypical zinc-finger fold.

It belongs to the RING-type zinc finger family. NIP subfamily.

The protein localises to the membrane. In terms of biological role, may be involved in the early steps of the plant defense signaling pathway. In Arabidopsis thaliana (Mouse-ear cress), this protein is NEP1-interacting protein-like 1 (ATL27).